Consider the following 401-residue polypeptide: Probable cysteine desulfurase (401 aa).

N6-(pyridoxal phosphate)lysine is present on Lys-223.

It belongs to the class-V pyridoxal-phosphate-dependent aminotransferase family. Csd subfamily. Requires pyridoxal 5'-phosphate as cofactor.

The catalysed reaction is (sulfur carrier)-H + L-cysteine = (sulfur carrier)-SH + L-alanine. In terms of biological role, catalyzes the removal of elemental sulfur and selenium atoms from L-cysteine, L-cystine, L-selenocysteine, and L-selenocystine to produce L-alanine. The chain is Probable cysteine desulfurase (csdA) from Pseudomonas putida (strain ATCC 47054 / DSM 6125 / CFBP 8728 / NCIMB 11950 / KT2440).